A 477-amino-acid chain; its full sequence is MEKHLPLIVNGQIISTEENRFEISFEEKKVKIDSFNNLHLTQMVNHDYLNDLNINNIINFLYTTGQRWKSEEYSRRRAYIRSLITYLGYSPQMAKLEANWIAMILCSKSALYDIIDTELGSTHIQDEWLPQGECYVRAFPKGRTMHLLAGNVPLSGVTSILRGILTRNQCIVRMSASDPFTAHALAMSFIDVDPNHPISRSISVLYWPHASDTTLAEELLSHMDAVVAWGGRDAIDWAVKHSPSHIDVLKFGPKKSFTVLDHPADLEEAASGVAHDICFYDQNACFSTQNIYFSGDKYEEFKLKLVEKLNLYQEVLPKSKQSFDDEALFSMTRLECQFSGLKVISEPENNWMIIESEPGVEYNHPLSRCVYVHKINKVDDVVQYIEKHQTQTISFYPWESSKKYRDAFAAKGVERIVESGMNNIFRAGGAHDAMRPLQRLVRFVSHERPYNFTTKDVSVEIEQTRFLEEDKFLVFVP.

It belongs to the LuxC family.

It carries out the reaction a long-chain fatty aldehyde + NADP(+) + CoA = a long-chain fatty acyl-CoA + NADPH + H(+). The protein operates within lipid metabolism; fatty acid reduction for biolumincescence. LuxC is the fatty acid reductase enzyme responsible for synthesis of the aldehyde substrate for the luminescent reaction catalyzed by luciferase. The polypeptide is Long-chain acyl-protein thioester reductase (luxC) (Vibrio harveyi (Beneckea harveyi)).